The following is a 600-amino-acid chain: CTP synthase (600 aa).

The 267-residue stretch at 304–570 (TIVLVGKYTH…IQSGEEVEWS (267 aa)) folds into the Glutamine amidotransferase type-1 domain. Catalysis depends on for GATase activity residues Cys-403, His-532, and Glu-534.

Belongs to the CTP synthase family.

It carries out the reaction UTP + L-glutamine + ATP + H2O = CTP + L-glutamate + ADP + phosphate + 2 H(+). The protein operates within pyrimidine metabolism; CTP biosynthesis via de novo pathway; CTP from UDP: step 2/2. Its function is as follows. Catalyzes the ATP-dependent amination of UTP to CTP with either L-glutamine or ammonia as the source of nitrogen. The chain is CTP synthase (ura7) from Schizosaccharomyces pombe (strain 972 / ATCC 24843) (Fission yeast).